We begin with the raw amino-acid sequence, 612 residues long: Dihydroxy-acid dehydratase (612 aa).

Mg(2+) is bound at residue D81. [2Fe-2S] cluster is bound at residue C122. The Mg(2+) site is built by D123 and K124. K124 carries the post-translational modification N6-carboxylysine. C195 is a binding site for [2Fe-2S] cluster. E491 provides a ligand contact to Mg(2+). The Proton acceptor role is filled by S517.

This sequence belongs to the IlvD/Edd family. In terms of assembly, homodimer. The cofactor is [2Fe-2S] cluster. It depends on Mg(2+) as a cofactor.

The catalysed reaction is (2R)-2,3-dihydroxy-3-methylbutanoate = 3-methyl-2-oxobutanoate + H2O. It catalyses the reaction (2R,3R)-2,3-dihydroxy-3-methylpentanoate = (S)-3-methyl-2-oxopentanoate + H2O. It functions in the pathway amino-acid biosynthesis; L-isoleucine biosynthesis; L-isoleucine from 2-oxobutanoate: step 3/4. The protein operates within amino-acid biosynthesis; L-valine biosynthesis; L-valine from pyruvate: step 3/4. In terms of biological role, functions in the biosynthesis of branched-chain amino acids. Catalyzes the dehydration of (2R,3R)-2,3-dihydroxy-3-methylpentanoate (2,3-dihydroxy-3-methylvalerate) into 2-oxo-3-methylpentanoate (2-oxo-3-methylvalerate) and of (2R)-2,3-dihydroxy-3-methylbutanoate (2,3-dihydroxyisovalerate) into 2-oxo-3-methylbutanoate (2-oxoisovalerate), the penultimate precursor to L-isoleucine and L-valine, respectively. This Psychromonas ingrahamii (strain DSM 17664 / CCUG 51855 / 37) protein is Dihydroxy-acid dehydratase.